We begin with the raw amino-acid sequence, 473 residues long: Notchless protein homolog (473 aa).

The interval 9-91 (GKTVMCLLTD…VLTIVYQQQA (83 aa)) is ubiquitin-like (UBL) domain. WD repeat units lie at residues 107–146 (GHAE…PLFT), 149–188 (GHKN…LEGS), 192–236 (GHKK…SIIC), 239–277 (GHTL…LIRE), 313–354 (EKQK…QPKK), 358–399 (GHQQ…TVFR), 400–439 (GHVG…LKQD), and 442–473 (GHAD…LWKG). The DWD box motif lies at 417 to 432 (LLSGSKDSTLKIWEIR).

It belongs to the NLE1/RSA4 family. In terms of assembly, associates with the pre-60S ribosomal particle. As to expression, constitutively and ubiquitously expressed.

It is found in the nucleus. The protein localises to the nucleolus. Its function is as follows. Required for female gametophyte development. This Arabidopsis thaliana (Mouse-ear cress) protein is Notchless protein homolog.